We begin with the raw amino-acid sequence, 503 residues long: Maturase K (503 aa).

The protein belongs to the intron maturase 2 family. MatK subfamily.

The protein localises to the plastid. The protein resides in the chloroplast. In terms of biological role, usually encoded in the trnK tRNA gene intron. Probably assists in splicing its own and other chloroplast group II introns. In Vicia faba (Broad bean), this protein is Maturase K.